Reading from the N-terminus, the 374-residue chain is Tuliposide A-converting enzyme b3, amyloplastic (374 aa).

An amyloplast-targeting transit peptide spans 1–68 (MSAALFCGPP…TNSSLSPSPT (68 aa)). Serine 226 functions as the Acyl-ester intermediate in the catalytic mechanism. Catalysis depends on charge relay system residues aspartate 316 and histidine 348.

Belongs to the AB hydrolase superfamily. Homodimer. In terms of tissue distribution, highly expressed in pistil and bulb scales. Lower expression in stem, and barely detected in root, leaf, petal and stamen.

It localises to the plastid. It is found in the amyloplast. It carries out the reaction 6-tuliposide A = tulipalin A + D-glucose. Functionally, lactone-forming carboxylesterases, specifically catalyzing intramolecular transesterification, but not hydrolysis. Involved in the biosynthesis of tulipalins, defensive chemicals that show antimicrobial activities against a broad range of strains of bacteria and fungi. Substrates are 6-tuliposide A &gt; 6-tuliposide B. The chain is Tuliposide A-converting enzyme b3, amyloplastic (TCEA-B3) from Tulipa gesneriana (Garden tulip).